The following is a 334-amino-acid chain: Ketol-acid reductoisomerase (NADP(+)) (334 aa).

The region spanning 3–183 (ATIYYENDAD…GGTRGGVIET (181 aa)) is the KARI N-terminal Rossmann domain. NADP(+) is bound by residues 26–29 (YGSQ), Arg49, Ser52, and 84–87 (DEVQ). The active site involves His109. Gly135 contacts NADP(+). Positions 184-329 (TFAEETETDL…LGLRRMMNWI (146 aa)) constitute a KARI C-terminal knotted domain. Mg(2+) is bound by residues Asp192, Glu196, Glu228, and Glu232. Ser253 provides a ligand contact to substrate.

Belongs to the ketol-acid reductoisomerase family. Mg(2+) is required as a cofactor.

The catalysed reaction is (2R)-2,3-dihydroxy-3-methylbutanoate + NADP(+) = (2S)-2-acetolactate + NADPH + H(+). The enzyme catalyses (2R,3R)-2,3-dihydroxy-3-methylpentanoate + NADP(+) = (S)-2-ethyl-2-hydroxy-3-oxobutanoate + NADPH + H(+). It functions in the pathway amino-acid biosynthesis; L-isoleucine biosynthesis; L-isoleucine from 2-oxobutanoate: step 2/4. It participates in amino-acid biosynthesis; L-valine biosynthesis; L-valine from pyruvate: step 2/4. Functionally, involved in the biosynthesis of branched-chain amino acids (BCAA). Catalyzes an alkyl-migration followed by a ketol-acid reduction of (S)-2-acetolactate (S2AL) to yield (R)-2,3-dihydroxy-isovalerate. In the isomerase reaction, S2AL is rearranged via a Mg-dependent methyl migration to produce 3-hydroxy-3-methyl-2-ketobutyrate (HMKB). In the reductase reaction, this 2-ketoacid undergoes a metal-dependent reduction by NADPH to yield (R)-2,3-dihydroxy-isovalerate. The protein is Ketol-acid reductoisomerase (NADP(+)) of Rhodopirellula baltica (strain DSM 10527 / NCIMB 13988 / SH1).